A 357-amino-acid polypeptide reads, in one-letter code: Red-sensitive opsin (357 aa).

Residues 1-49 (MGDQWGDAVFAARRRGDDTTREAAFTYTNSNNTKDPFEGPNYHIAPRWV) are Extracellular-facing. The N-linked (GlcNAc...) asparagine glycan is linked to Asn31. The chain crosses the membrane as a helical span at residues 50–74 (YNLATCWMFFVVVASTVTNGLVLVA). Residues 75-86 (SAKFKKLRHPLN) lie on the Cytoplasmic side of the membrane. Residues 87 to 112 (WILVNLAIADLLETLLASTISVCNQF) form a helical membrane-spanning segment. Residues 113-126 (FGYFILGHPMCVFE) are Extracellular-facing. The cysteines at positions 123 and 200 are disulfide-linked. The chain crosses the membrane as a helical span at residues 127 to 146 (GFTVATCGIAGLWSLTVISW). Topologically, residues 147-165 (ERWVVVCKPFGNVKFDGKM) are cytoplasmic. Residues 166 to 189 (ATAGIVFTWVWSAVWCAPPIFGWS) traverse the membrane as a helical segment. The Extracellular segment spans residues 190–215 (RYWPHGLKTSCGPDVFSGSEDPGVQS). A helical membrane pass occupies residues 216-243 (YMIVLMITCCFIPLGIIILCYIAVWWAI). The Cytoplasmic segment spans residues 244 to 265 (RTVAQQQKDSESTQKAEKEVSR). A helical transmembrane segment spans residues 266–289 (MVVVMIMAYCFCWGPYTFFACFAA). The Extracellular portion of the chain corresponds to 290-297 (ANPGYAFH). A helical membrane pass occupies residues 298 to 322 (PLAAAMPAYFAKSATIYNPVIYVFM). Lys309 is subject to N6-(retinylidene)lysine. Over 323–357 (NRQFRVCIMQLFGKKVDDGSEVSTSKTEVSSVAPA) the chain is Cytoplasmic.

This sequence belongs to the G-protein coupled receptor 1 family. Opsin subfamily. Post-translationally, phosphorylated on some or all of the serine and threonine residues present in the C-terminal region. The color pigments are found in the cone photoreceptor cells.

The protein localises to the membrane. In terms of biological role, visual pigments are the light-absorbing molecules that mediate vision. They consist of an apoprotein, opsin, covalently linked to cis-retinal. In Psalidodon fasciatus (Banded astyanax), this protein is Red-sensitive opsin (R007).